The following is a 190-amino-acid chain: Potassium-transporting ATPase KdpC subunit (190 aa).

The chain crosses the membrane as a helical span at residues 10 to 30; sequence TFIFLLLITGGVYPLLTTVLG.

Belongs to the KdpC family. As to quaternary structure, the system is composed of three essential subunits: KdpA, KdpB and KdpC.

The protein resides in the cell inner membrane. In terms of biological role, part of the high-affinity ATP-driven potassium transport (or Kdp) system, which catalyzes the hydrolysis of ATP coupled with the electrogenic transport of potassium into the cytoplasm. This subunit acts as a catalytic chaperone that increases the ATP-binding affinity of the ATP-hydrolyzing subunit KdpB by the formation of a transient KdpB/KdpC/ATP ternary complex. The sequence is that of Potassium-transporting ATPase KdpC subunit from Escherichia coli (strain 55989 / EAEC).